The following is a 320-amino-acid chain: Protein TsetseEP (320 aa).

The signal sequence occupies residues methionine 1–alanine 19. The tract at residues glycine 192–phenylalanine 320 is disordered. The span at proline 194–proline 308 shows a compositional bias: acidic residues. Positions proline 194–glutamate 311 are 59 X 2 AA tandem repeats of P-E.

As to expression, expressed in the gut, but not salivary glands, of female and male flies (at protein level). Present in vesicles in midgut cells and in the lumen of the gut.

It localises to the secreted. This chain is Protein TsetseEP, found in Glossina morsitans morsitans (Savannah tsetse fly).